A 229-amino-acid polypeptide reads, in one-letter code: Flagellar L-ring protein (229 aa).

An N-terminal signal peptide occupies residues 1-23 (MNPLTRVALAVAAFAALVLALSA). C24 is lipidated: N-palmitoyl cysteine. A lipid anchor (S-diacylglycerol cysteine) is attached at C24.

The protein belongs to the FlgH family. As to quaternary structure, the basal body constitutes a major portion of the flagellar organelle and consists of four rings (L,P,S, and M) mounted on a central rod.

The protein resides in the cell outer membrane. It localises to the bacterial flagellum basal body. Functionally, assembles around the rod to form the L-ring and probably protects the motor/basal body from shearing forces during rotation. The sequence is that of Flagellar L-ring protein from Anaeromyxobacter dehalogenans (strain 2CP-1 / ATCC BAA-258).